Consider the following 393-residue polypeptide: 2-methylcitrate synthase (393 aa).

Residues arginine 92 and histidine 207 each contribute to the substrate site. Residue histidine 242 is part of the active site. Residue lysine 275 to phenylalanine 279 participates in CoA binding. The active site involves histidine 281. Substrate is bound at residue arginine 290. Aspartate 332 is an active-site residue. Substrate contacts are provided by arginine 357 and arginine 376.

It belongs to the citrate synthase family. In terms of assembly, homodimer.

It catalyses the reaction propanoyl-CoA + oxaloacetate + H2O = (2S,3S)-2-methylcitrate + CoA + H(+). It carries out the reaction oxaloacetate + acetyl-CoA + H2O = citrate + CoA + H(+). It functions in the pathway organic acid metabolism; propanoate degradation. The protein operates within carbohydrate metabolism; tricarboxylic acid cycle; isocitrate from oxaloacetate: step 1/2. In terms of biological role, involved in the catabolism of short chain fatty acids (SCFA) via the tricarboxylic acid (TCA)(acetyl degradation route) and via the 2-methylcitrate cycle I (propionate degradation route). Catalyzes the Claisen condensation of propionyl-CoA and oxaloacetate (OAA) to yield 2-methylcitrate (2-MC) and CoA. Also catalyzes the condensation of oxaloacetate with acetyl-CoA. The protein is 2-methylcitrate synthase (gltA1) of Mycobacterium tuberculosis (strain ATCC 35801 / TMC 107 / Erdman).